The following is a 124-amino-acid chain: MARISGVDLPREKRIEIGLTYVYGIGRVRASKILEEAGVNPDTRVKDLTDEEVAKIAKVIDADPEHLVEGDLRREVAMNIKRLKEIGCYRGIRHRKGLPCRGQKTKTNARTCKGPKKTVANKKK.

The interval 99 to 124 is disordered; it reads PCRGQKTKTNARTCKGPKKTVANKKK. The segment covering 113-124 has biased composition (basic residues); it reads KGPKKTVANKKK.

Belongs to the universal ribosomal protein uS13 family. In terms of assembly, part of the 30S ribosomal subunit. Forms a loose heterodimer with protein S19. Forms two bridges to the 50S subunit in the 70S ribosome.

Functionally, located at the top of the head of the 30S subunit, it contacts several helices of the 16S rRNA. In the 70S ribosome it contacts the 23S rRNA (bridge B1a) and protein L5 of the 50S subunit (bridge B1b), connecting the 2 subunits; these bridges are implicated in subunit movement. Contacts the tRNAs in the A and P-sites. The protein is Small ribosomal subunit protein uS13 of Lachnospira eligens (strain ATCC 27750 / DSM 3376 / VPI C15-48 / C15-B4) (Eubacterium eligens).